We begin with the raw amino-acid sequence, 463 residues long: Ribosomal protein uS12 methylthiotransferase RimO (463 aa).

The disordered stretch occupies residues 1–26; that stretch reads MPAMSQNPPLLRPDLAPAPIFDTSRR. Residues 8–19 are compositionally biased toward low complexity; that stretch reads PPLLRPDLAPAP. The region spanning 30–140 is the MTTase N-terminal domain; the sequence is PTIGMVSLGC…VLDAVHHAVP (111 aa). 6 residues coordinate [4Fe-4S] cluster: Cys39, Cys75, Cys104, Cys171, Cys175, and Cys178. Residues 157-395 enclose the Radical SAM core domain; that stretch reads LTPRHYSYLK…MQKAQAISEA (239 aa). The 66-residue stretch at 398 to 463 folds into the TRAM domain; that stretch reads AAKVGHRIEV…AGEYDLWGRL (66 aa).

This sequence belongs to the methylthiotransferase family. RimO subfamily. It depends on [4Fe-4S] cluster as a cofactor.

It is found in the cytoplasm. The enzyme catalyses L-aspartate(89)-[ribosomal protein uS12]-hydrogen + (sulfur carrier)-SH + AH2 + 2 S-adenosyl-L-methionine = 3-methylsulfanyl-L-aspartate(89)-[ribosomal protein uS12]-hydrogen + (sulfur carrier)-H + 5'-deoxyadenosine + L-methionine + A + S-adenosyl-L-homocysteine + 2 H(+). Its function is as follows. Catalyzes the methylthiolation of an aspartic acid residue of ribosomal protein uS12. The polypeptide is Ribosomal protein uS12 methylthiotransferase RimO (Paracoccus denitrificans (strain Pd 1222)).